The chain runs to 231 residues: Adenosylcobinamide-GDP ribazoletransferase (231 aa).

The next 5 helical transmembrane spans lie at 28-48 (LWLF…PHFI), 97-117 (TGAG…TLLY), 121-141 (FWEI…LMLL), 162-182 (VFIG…ESLA), and 209-229 (VIGS…TIAG).

This sequence belongs to the CobS family. Mg(2+) is required as a cofactor.

The protein localises to the cell membrane. It carries out the reaction alpha-ribazole + adenosylcob(III)inamide-GDP = adenosylcob(III)alamin + GMP + H(+). It catalyses the reaction alpha-ribazole 5'-phosphate + adenosylcob(III)inamide-GDP = adenosylcob(III)alamin 5'-phosphate + GMP + H(+). It participates in cofactor biosynthesis; adenosylcobalamin biosynthesis; adenosylcobalamin from cob(II)yrinate a,c-diamide: step 7/7. In terms of biological role, joins adenosylcobinamide-GDP and alpha-ribazole to generate adenosylcobalamin (Ado-cobalamin). Also synthesizes adenosylcobalamin 5'-phosphate from adenosylcobinamide-GDP and alpha-ribazole 5'-phosphate. The chain is Adenosylcobinamide-GDP ribazoletransferase (cobS2) from Archaeoglobus fulgidus (strain ATCC 49558 / DSM 4304 / JCM 9628 / NBRC 100126 / VC-16).